The sequence spans 496 residues: uncharacterized protein (496 aa).

Asp36, Asp81, Glu300, Glu302, Asp321, Asp323, and Asp375 together coordinate Mg(2+).

The protein belongs to the XPG/RAD2 endonuclease family. FEN1 subfamily. Mg(2+) serves as cofactor.

This is an uncharacterized protein from Schizosaccharomyces pombe (strain 972 / ATCC 24843) (Fission yeast).